We begin with the raw amino-acid sequence, 610 residues long: Scarecrow-like protein 11 (610 aa).

3 disordered regions span residues 32 to 54 (NNLFPDFHESQNQSSPNDSPPTV), 98 to 159 (QQSP…RRNK), and 186 to 220 (QEEEEERTVITKQSTPNRAGRAKGSSNKSKTHKTN). 2 stretches are compositionally biased toward low complexity: residues 41 to 52 (SQNQSSPNDSPP) and 99 to 119 (QSPESDQNTSSSSDQNSGDQD). 2 stretches are compositionally biased toward polar residues: residues 123 to 137 (PSTTTDSSALVSSGE) and 209 to 220 (GSSNKSKTHKTN). Residues 215–598 (KTHKTNTVDL…RVIYAFSCWK (384 aa)) enclose the GRAS domain. The leucine repeat I (LRI) stretch occupies residues 222–283 (VDLRSLLTQC…ARITGNISPP (62 aa)). A VHIID region spans residues 302 to 367 (YKLFVHTCPI…GGPPMLRVTG (66 aa)). A VHIID motif is present at residues 333-337 (LHIVD). The tract at residues 383 to 415 (ETGRRLKRFCDQFNVPFEFNFIAKKWETITLDE) is leucine repeat II (LRII). Residues 424–520 (TVVNCIHRLQ…RELLVRDAMS (97 aa)) form a PFYRE region. The segment at 523–598 (SCEGAERFAR…RVIYAFSCWK (76 aa)) is SAW.

It belongs to the GRAS family. In terms of tissue distribution, highly expressed in roots and at lower levels in leaves and sepals. Expressed in siliques.

It is found in the nucleus. In terms of biological role, probable transcription factor involved in plant development. The chain is Scarecrow-like protein 11 (SCL11) from Arabidopsis thaliana (Mouse-ear cress).